Here is a 369-residue protein sequence, read N- to C-terminus: Histidinol-phosphate aminotransferase (369 aa).

K223 carries the N6-(pyridoxal phosphate)lysine modification.

This sequence belongs to the class-II pyridoxal-phosphate-dependent aminotransferase family. Histidinol-phosphate aminotransferase subfamily. In terms of assembly, homodimer. The cofactor is pyridoxal 5'-phosphate.

It carries out the reaction L-histidinol phosphate + 2-oxoglutarate = 3-(imidazol-4-yl)-2-oxopropyl phosphate + L-glutamate. Its pathway is amino-acid biosynthesis; L-histidine biosynthesis; L-histidine from 5-phospho-alpha-D-ribose 1-diphosphate: step 7/9. In Shouchella clausii (strain KSM-K16) (Alkalihalobacillus clausii), this protein is Histidinol-phosphate aminotransferase.